A 401-amino-acid polypeptide reads, in one-letter code: Probable tRNA sulfurtransferase (401 aa).

Residues 60 to 165 enclose the THUMP domain; sequence EALFPHLKQV…EEATFLTIRD (106 aa). ATP contacts are provided by residues 183–184, 208–209, Arg265, Gly287, and Gln296; these read ML and HF.

It belongs to the ThiI family.

It is found in the cytoplasm. It carries out the reaction [ThiI sulfur-carrier protein]-S-sulfanyl-L-cysteine + a uridine in tRNA + 2 reduced [2Fe-2S]-[ferredoxin] + ATP + H(+) = [ThiI sulfur-carrier protein]-L-cysteine + a 4-thiouridine in tRNA + 2 oxidized [2Fe-2S]-[ferredoxin] + AMP + diphosphate. It catalyses the reaction [ThiS sulfur-carrier protein]-C-terminal Gly-Gly-AMP + S-sulfanyl-L-cysteinyl-[cysteine desulfurase] + AH2 = [ThiS sulfur-carrier protein]-C-terminal-Gly-aminoethanethioate + L-cysteinyl-[cysteine desulfurase] + A + AMP + 2 H(+). Its pathway is cofactor biosynthesis; thiamine diphosphate biosynthesis. Its function is as follows. Catalyzes the ATP-dependent transfer of a sulfur to tRNA to produce 4-thiouridine in position 8 of tRNAs, which functions as a near-UV photosensor. Also catalyzes the transfer of sulfur to the sulfur carrier protein ThiS, forming ThiS-thiocarboxylate. This is a step in the synthesis of thiazole, in the thiamine biosynthesis pathway. The sulfur is donated as persulfide by IscS. This is Probable tRNA sulfurtransferase from Bacillus subtilis (strain 168).